Consider the following 148-residue polypeptide: Protein-export protein SecB (148 aa).

It belongs to the SecB family. Homotetramer, a dimer of dimers. One homotetramer interacts with 1 SecA dimer.

It is found in the cytoplasm. In terms of biological role, one of the proteins required for the normal export of preproteins out of the cell cytoplasm. It is a molecular chaperone that binds to a subset of precursor proteins, maintaining them in a translocation-competent state. It also specifically binds to its receptor SecA. The sequence is that of Protein-export protein SecB from Psychrobacter arcticus (strain DSM 17307 / VKM B-2377 / 273-4).